A 369-amino-acid polypeptide reads, in one-letter code: Protein VP6 (369 aa).

The disordered stretch occupies residues 20-208; sequence LEQRSIAPLL…EEAKVGGGDR (189 aa). The segment covering 29–66 has biased composition (basic and acidic residues); that stretch reads LREKNSTEAKSKLKEDGEKKNKSEKEENKIHDDRRVES. Gly residues-rich tracts occupy residues 92-111 and 162-171; these read TGGG…GGVG and TSGGLQGRGG. Residues 196 to 208 show a composition bias toward basic and acidic residues; sequence TEGEEAKVGGGDR.

It belongs to the orbivirus VP6 family.

Its subcellular location is the virion. In African horse sickness virus 3 (AHSV-3), this protein is Protein VP6 (S9).